Reading from the N-terminus, the 1332-residue chain is Elongator complex protein 1 (1332 aa).

Residues Ser471, Ser804, Ser867, Ser1171, and Ser1174 each carry the phosphoserine modification. The mediates dimerization stretch occupies residues 885–1332; the sequence is VDVNELYDHS…RTQWKLSLLD (448 aa). Positions 1150 to 1208 are disordered; the sequence is QAGLDDEVPHGQESDLFSETSSVVSGSEMSGKYSHSNSRISARSSKNRRKAERKKHSLK. Residues 1164-1177 are compositionally biased toward polar residues; it reads DLFSETSSVVSGSE. The required for binding to tRNA stretch occupies residues 1191–1209; sequence ARSSKNRRKAERKKHSLKE. Basic residues predominate over residues 1194-1206; it reads SKNRRKAERKKHS.

This sequence belongs to the ELP1/IKA1 family. In terms of assembly, homodimer; dimerization promotes ELP1 stability and elongator complex formation. Component of the elongator complex which consists of ELP1, ELP2, ELP3, ELP4, ELP5 and ELP6. Interacts preferentially with MAP3K14/NIK followed by IKK-alpha and IKK-beta.

It is found in the cytoplasm. The protein localises to the nucleus. It functions in the pathway tRNA modification; 5-methoxycarbonylmethyl-2-thiouridine-tRNA biosynthesis. Component of the elongator complex which is required for multiple tRNA modifications, including mcm5U (5-methoxycarbonylmethyl uridine), mcm5s2U (5-methoxycarbonylmethyl-2-thiouridine), and ncm5U (5-carbamoylmethyl uridine). The elongator complex catalyzes the formation of carboxymethyluridine in the wobble base at position 34 in tRNAs. Regulates the migration and branching of projection neurons in the developing cerebral cortex, through a process depending on alpha-tubulin acetylation. ELP1 binds to tRNA, mediating interaction of the elongator complex with tRNA. May act as a scaffold protein that assembles active IKK-MAP3K14 complexes (IKKA, IKKB and MAP3K14/NIK). The sequence is that of Elongator complex protein 1 from Homo sapiens (Human).